A 156-amino-acid polypeptide reads, in one-letter code: Arginine repressor (156 aa).

This sequence belongs to the ArgR family.

The protein resides in the cytoplasm. It participates in amino-acid biosynthesis; L-arginine biosynthesis [regulation]. In terms of biological role, regulates arginine biosynthesis genes. The sequence is that of Arginine repressor from Shigella boydii serotype 18 (strain CDC 3083-94 / BS512).